A 400-amino-acid polypeptide reads, in one-letter code: F-box/LRR-repeat protein 14 (400 aa).

One can recognise an F-box domain in the interval 2 to 48 (ETHISCLFPELLAMIFGYLDVRDKGRAAQVCTAWRDAAYHKSVWRGV). Residues 2–48 (ETHISCLFPELLAMIFGYLDVRDKGRAAQVCTAWRDAAYHKSVWRGV) are required for down-regulation of SNAI1. LRR repeat units lie at residues 144–163 (GLEV…GLLL), 170–191 (RLKS…GHLA), 203–225 (GLEQ…HISR), 229–250 (GLRL…LHLS), and 254–275 (SLRS…MHLA).

Part of a SCF (SKP1-cullin-F-box) ubiquitin-protein ligase complex. Interacts with SKP1 and CUL1. Interacts with SNAI1; the interaction requires the phosphorylation of the two serine residues in the substrate destruction motif D-S-G-X(2,3,4)-S.

It localises to the cytoplasm. Its function is as follows. Substrate-recognition component of some SCF (SKP1-CUL1-F-box protein)-type E3 ubiquitin-protein ligase complexes. The SCF(FBXL14) complex acts by mediating ubiquitination and subsequent degradation of SNAI1. This Bos taurus (Bovine) protein is F-box/LRR-repeat protein 14 (FBXL14).